The chain runs to 562 residues: Laccase-2 (562 aa).

The first 26 residues, 1–26, serve as a signal peptide directing secretion; sequence MASAASSLPLLVSSLLLALFALGAHA. 2 consecutive Plastocyanin-like domains span residues 34 to 150 and 160 to 312; these read DIVM…PAAG and DEAE…YAGV. Asn-39, Asn-53, Asn-72, and Asn-80 each carry an N-linked (GlcNAc...) asparagine glycan. Cu cation is bound by residues His-84 and His-86. Asn-118 carries an N-linked (GlcNAc...) asparagine glycan. Residues His-129 and His-131 each coordinate Cu cation. N-linked (GlcNAc...) asparagine glycans are attached at residues Asn-189, Asn-244, Asn-300, Asn-328, Asn-376, Asn-386, Asn-421, and Asn-445. Residues 411-546 form the Plastocyanin-like 3 domain; that stretch reads DFPDRPPARF…KMAFLVEDGS (136 aa). Positions 463, 466, 468, 525, 526, 527, and 531 each coordinate Cu cation.

This sequence belongs to the multicopper oxidase family. The cofactor is Cu cation.

The protein localises to the secreted. It localises to the extracellular space. It is found in the apoplast. The enzyme catalyses 4 hydroquinone + O2 = 4 benzosemiquinone + 2 H2O. Functionally, lignin degradation and detoxification of lignin-derived products. This chain is Laccase-2 (LAC2), found in Oryza sativa subsp. japonica (Rice).